The following is a 620-amino-acid chain: 1-deoxy-D-xylulose-5-phosphate synthase (620 aa).

Thiamine diphosphate-binding positions include His-80 and 121 to 123 (GHS). Asp-152 is a Mg(2+) binding site. Thiamine diphosphate contacts are provided by residues 153-154 (GA), Asn-181, Tyr-288, and Glu-370. A Mg(2+)-binding site is contributed by Asn-181.

The protein belongs to the transketolase family. DXPS subfamily. Homodimer. The cofactor is Mg(2+). Requires thiamine diphosphate as cofactor.

The enzyme catalyses D-glyceraldehyde 3-phosphate + pyruvate + H(+) = 1-deoxy-D-xylulose 5-phosphate + CO2. Its pathway is metabolic intermediate biosynthesis; 1-deoxy-D-xylulose 5-phosphate biosynthesis; 1-deoxy-D-xylulose 5-phosphate from D-glyceraldehyde 3-phosphate and pyruvate: step 1/1. Its function is as follows. Catalyzes the acyloin condensation reaction between C atoms 2 and 3 of pyruvate and glyceraldehyde 3-phosphate to yield 1-deoxy-D-xylulose-5-phosphate (DXP). The protein is 1-deoxy-D-xylulose-5-phosphate synthase of Escherichia coli O157:H7.